Here is a 218-residue protein sequence, read N- to C-terminus: uncharacterized protein (218 aa).

Helical transmembrane passes span 8–28 and 158–178; these read LAVF…ATAG and ILFY…FLLI.

The protein resides in the cell membrane. This is an uncharacterized protein from Mycoplasma genitalium (strain ATCC 33530 / DSM 19775 / NCTC 10195 / G37) (Mycoplasmoides genitalium).